The following is a 418-amino-acid chain: Secernin-3 (418 aa).

The propeptide occupies 1–5; it reads MEPYS. Residue Cys6 is part of the active site. Residue Cys6 is modified to Glyoxylic acid (Cys); alternate. Position 6 is a pyruvic acid (Cys); alternate (Cys6).

The protein belongs to the peptidase C69 family. Secernin subfamily.

Its function is as follows. Plays a role in thermal nociception. This is Secernin-3 (Scrn3) from Mus musculus (Mouse).